Here is a 185-residue protein sequence, read N- to C-terminus: UPF0397 protein LGAS_1499 (185 aa).

5 consecutive transmembrane segments (helical) span residues 6–26 (GLSV…VILA), 46–66 (FLAL…GFIG), 78–98 (TWWS…LYGM), 118–138 (VQII…DILI), and 147–167 (FLQG…LGTI).

It belongs to the UPF0397 family.

It is found in the cell membrane. The polypeptide is UPF0397 protein LGAS_1499 (Lactobacillus gasseri (strain ATCC 33323 / DSM 20243 / BCRC 14619 / CIP 102991 / JCM 1131 / KCTC 3163 / NCIMB 11718 / NCTC 13722 / AM63)).